A 129-amino-acid chain; its full sequence is Lysozyme C, milk isozyme (129 aa).

A C-type lysozyme domain is found at 1-129 (KIFSKCELAR…LSKYLASCNL (129 aa)). 4 cysteine pairs are disulfide-bonded: C6/C127, C30/C115, C65/C80, and C76/C94. Residues E35 and D53 contribute to the active site. Residues K82, D85, N87, D90, and D91 each coordinate Ca(2+).

The protein belongs to the glycosyl hydrolase 22 family. As to quaternary structure, monomer. Ca(2+) is required as a cofactor.

The enzyme catalyses Hydrolysis of (1-&gt;4)-beta-linkages between N-acetylmuramic acid and N-acetyl-D-glucosamine residues in a peptidoglycan and between N-acetyl-D-glucosamine residues in chitodextrins.. Functionally, lysozymes have primarily a bacteriolytic function; those in tissues and body fluids are associated with the monocyte-macrophage system and enhance the activity of immunoagents. The sequence is that of Lysozyme C, milk isozyme from Canis lupus familiaris (Dog).